We begin with the raw amino-acid sequence, 477 residues long: UDP-N-acetylmuramate--L-alanine ligase (477 aa).

ATP is bound at residue 117–123 (GTHGKTT).

Belongs to the MurCDEF family.

It localises to the cytoplasm. The enzyme catalyses UDP-N-acetyl-alpha-D-muramate + L-alanine + ATP = UDP-N-acetyl-alpha-D-muramoyl-L-alanine + ADP + phosphate + H(+). It functions in the pathway cell wall biogenesis; peptidoglycan biosynthesis. Cell wall formation. The protein is UDP-N-acetylmuramate--L-alanine ligase of Phenylobacterium zucineum (strain HLK1).